Reading from the N-terminus, the 225-residue chain is Uracil-DNA glycosylase (225 aa).

Asp65 functions as the Proton acceptor in the catalytic mechanism.

It belongs to the uracil-DNA glycosylase (UDG) superfamily. UNG family.

It localises to the cytoplasm. It catalyses the reaction Hydrolyzes single-stranded DNA or mismatched double-stranded DNA and polynucleotides, releasing free uracil.. Excises uracil residues from the DNA which can arise as a result of misincorporation of dUMP residues by DNA polymerase or due to deamination of cytosine. The chain is Uracil-DNA glycosylase from Bacillus licheniformis (strain ATCC 14580 / DSM 13 / JCM 2505 / CCUG 7422 / NBRC 12200 / NCIMB 9375 / NCTC 10341 / NRRL NRS-1264 / Gibson 46).